Here is a 222-residue protein sequence, read N- to C-terminus: Eukaryotic translation initiation factor 3 subunit K (222 aa).

In terms of domain architecture, PCI spans 46–208 (YDLEANLAVL…KIKTKNITEK (163 aa)).

The protein belongs to the eIF-3 subunit K family. Component of the eukaryotic translation initiation factor 3 (eIF-3) complex. The eIF-3 complex interacts with pix.

The protein resides in the cytoplasm. In terms of biological role, component of the eukaryotic translation initiation factor 3 (eIF-3) complex, which is involved in protein synthesis of a specialized repertoire of mRNAs and, together with other initiation factors, stimulates binding of mRNA and methionyl-tRNAi to the 40S ribosome. The eIF-3 complex specifically targets and initiates translation of a subset of mRNAs involved in cell proliferation. The polypeptide is Eukaryotic translation initiation factor 3 subunit K (Drosophila sechellia (Fruit fly)).